A 234-amino-acid polypeptide reads, in one-letter code: MTKQVRIVVLTGAGISAESGIRTFRATDGLWENHPVDEVATPEGFARNPKLVQRFYNERRKQLFSDQIAPNAAHFALAELEKKLGDNLLIVTQNVDNLHERAGSKNLIHMHGELLKVRCVKSGKIYDWQGDIGEHDKCLCCTPTQILRPHIVWFGEMPLEMEKIQTALSECDYFISIGTSGNVYPAAGFVREALFYGAHTVELNLEPSQVRSSFDECHYGKATELVPHYLAQFL.

One can recognise a Deacetylase sirtuin-type domain in the interval 1 to 234 (MTKQVRIVVL…LVPHYLAQFL (234 aa)). An NAD(+)-binding site is contributed by 12–31 (GAGISAESGIRTFRATDGLW). Substrate is bound by residues tyrosine 56 and arginine 59. 93–96 (QNVD) is a binding site for NAD(+). The active-site Proton acceptor is the histidine 111. Positions 119 and 138 each coordinate Zn(2+). NAD(+) is bound by residues 178 to 180 (GTS), 204 to 206 (NLE), and alanine 222.

This sequence belongs to the sirtuin family. Class III subfamily. Requires Zn(2+) as cofactor.

Its subcellular location is the cytoplasm. The catalysed reaction is N(6)-acetyl-L-lysyl-[protein] + NAD(+) + H2O = 2''-O-acetyl-ADP-D-ribose + nicotinamide + L-lysyl-[protein]. It carries out the reaction N(6)-succinyl-L-lysyl-[protein] + NAD(+) + H2O = 2''-O-succinyl-ADP-D-ribose + nicotinamide + L-lysyl-[protein]. NAD-dependent lysine deacetylase and desuccinylase that specifically removes acetyl and succinyl groups on target proteins. Modulates the activities of several proteins which are inactive in their acylated form. The polypeptide is NAD-dependent protein deacylase (Pasteurella multocida (strain Pm70)).